The primary structure comprises 718 residues: Serine/threonine-protein kinase PAK 5 (718 aa).

Disordered stretches follow at residues 1 to 29 (MFGK…DPQE), 96 to 119 (RSNS…IQGH), 226 to 245 (SPLD…TSRC), 264 to 296 (YDRR…QEPM), and 339 to 371 (VFSP…SSSH). The 14-residue stretch at 11-24 (ISGPSNFEHRVHTG) folds into the CRIB domain. Residues 25-447 (FDPQEQKFTG…VVSPGDPREY (423 aa)) are linker. The residue at position 104 (serine 104) is a Phosphoserine. The residue at position 107 (threonine 107) is a Phosphothreonine. A compositionally biased stretch (polar residues) spans 226-244 (SPLDYSFQLTPSRTAGTSR). The segment covering 359–371 (QSQSKVGYSSSSH) has biased composition (low complexity). Residues 448–699 (LDNFIKIGEG…AQELLGHPFL (252 aa)) form the Protein kinase domain. Residues 454–462 (IGEGSTGIV) and lysine 477 contribute to the ATP site. The active-site Proton acceptor is aspartate 567.

Belongs to the protein kinase superfamily. STE Ser/Thr protein kinase family. STE20 subfamily. Interacts tightly with GTP-bound but not GDP-bound CDC42/p21 and RAC1. Interacts with MARK2, leading to inhibit MARK2 independently of kinase activity. Interacts with RHOD and RHOH. In terms of processing, autophosphorylated when activated by CDC42/p21.

The protein resides in the mitochondrion. The protein localises to the cytoplasm. It is found in the nucleus. It carries out the reaction L-seryl-[protein] + ATP = O-phospho-L-seryl-[protein] + ADP + H(+). It catalyses the reaction L-threonyl-[protein] + ATP = O-phospho-L-threonyl-[protein] + ADP + H(+). Functionally, serine/threonine protein kinase that plays a role in a variety of different signaling pathways including cytoskeleton regulation, cell migration, proliferation or cell survival. Activation by various effectors including growth factor receptors or active CDC42 and RAC1 results in a conformational change and a subsequent autophosphorylation on several serine and/or threonine residues. Phosphorylates the proto-oncogene RAF and stimulates its kinase activity. Promotes cell survival by phosphorylating the BCL2 antagonist of cell death BAD. Phosphorylates CTNND1, probably to regulate cytoskeletal organization and cell morphology. Keeps microtubules stable through MARK2 inhibition and destabilizes the F-actin network leading to the disappearance of stress fibers and focal adhesions. The protein is Serine/threonine-protein kinase PAK 5 (Pak5) of Rattus norvegicus (Rat).